The sequence spans 226 residues: ATP synthase F(0) complex subunit a (226 aa).

A run of 6 helical transmembrane segments spans residues 6–26, 68–88, 97–117, 138–158, 164–184, and 189–209; these read FASFITPVILGLPLVTLIVLF, WALMLMSLILFIGSTNLLGLL, QLSMNLGMAIPLWAGAVITGF, IPMLVIIETISLFIQPVALAV, ITAGHLLIHLIGGATLALMSI, and ALITFTILILLTILEFAVAMI.

It belongs to the ATPase A chain family. Component of the ATP synthase complex composed at least of ATP5F1A/subunit alpha, ATP5F1B/subunit beta, ATP5MC1/subunit c (homooctomer), MT-ATP6/subunit a, MT-ATP8/subunit 8, ATP5ME/subunit e, ATP5MF/subunit f, ATP5MG/subunit g, ATP5MK/subunit k, ATP5MJ/subunit j, ATP5F1C/subunit gamma, ATP5F1D/subunit delta, ATP5F1E/subunit epsilon, ATP5PF/subunit F6, ATP5PB/subunit b, ATP5PD/subunit d, ATP5PO/subunit OSCP. ATP synthase complex consists of a soluble F(1) head domain (subunits alpha(3) and beta(3)) - the catalytic core - and a membrane F(0) domain - the membrane proton channel (subunits c, a, 8, e, f, g, k and j). These two domains are linked by a central stalk (subunits gamma, delta, and epsilon) rotating inside the F1 region and a stationary peripheral stalk (subunits F6, b, d, and OSCP). Interacts with DNAJC30; interaction is direct.

It is found in the mitochondrion inner membrane. The catalysed reaction is H(+)(in) = H(+)(out). In terms of biological role, subunit a, of the mitochondrial membrane ATP synthase complex (F(1)F(0) ATP synthase or Complex V) that produces ATP from ADP in the presence of a proton gradient across the membrane which is generated by electron transport complexes of the respiratory chain. ATP synthase complex consist of a soluble F(1) head domain - the catalytic core - and a membrane F(1) domain - the membrane proton channel. These two domains are linked by a central stalk rotating inside the F(1) region and a stationary peripheral stalk. During catalysis, ATP synthesis in the catalytic domain of F(1) is coupled via a rotary mechanism of the central stalk subunits to proton translocation. With the subunit c (ATP5MC1), forms the proton-conducting channel in the F(0) domain, that contains two crucial half-channels (inlet and outlet) that facilitate proton movement from the mitochondrial intermembrane space (IMS) into the matrix. Protons are taken up via the inlet half-channel and released through the outlet half-channel, following a Grotthuss mechanism. In Bos indicus (Zebu), this protein is ATP synthase F(0) complex subunit a.